The sequence spans 294 residues: Early 4 ORF6 protein (294 aa).

The Nuclear localization signal motif lies at 239–255 (ARRTRRLMLRAVRIIAE).

This sequence belongs to the adenoviridae E4 30 to 34 kDa protein family. As to quaternary structure, interacts with E1B-55k.

The protein localises to the host nucleus. It is found in the host cytoplasm. Plays a major role to prevent cellular inhibition of viral genome replication by nuclear bodies. Assembles an SCF-like E3 ubiquitin ligase complex based on the cellular proteins ELOB, ELOC, CUL5 and RBX1, in cooperation with viral E1B-55K. This viral RING-type ligase ubiquitinates cellular substrates prior to proteasomal degradation: p53/TP53, LIG4, MRE11-RAD50-NBS1 (MRN) complex, ITGA3, DAXX and BLM. This chain is Early 4 ORF6 protein, found in Homo sapiens (Human).